We begin with the raw amino-acid sequence, 66 residues long: Large ribosomal subunit protein uL29 (66 aa).

It belongs to the universal ribosomal protein uL29 family.

This chain is Large ribosomal subunit protein uL29, found in Thermococcus sibiricus (strain DSM 12597 / MM 739).